A 92-amino-acid chain; its full sequence is MLEIEIVYGLPDRQVLKTMQLAEGTTVRAAALQSGLDGIFEDLNLHSAPLGIFGKAVKDDTPLRDGDRIEVYRPLLIDPKEARRKRVQNQEE.

Belongs to the UPF0125 (RnfH) family.

This Neisseria meningitidis serogroup A / serotype 4A (strain DSM 15465 / Z2491) protein is UPF0125 protein NMA1005.